Reading from the N-terminus, the 125-residue chain is Fluoride-specific ion channel FluC (125 aa).

Helical transmembrane passes span 5–25, 33–53, 69–89, and 101–121; these read FVFI…LAGF, FFPF…GFLW, FVLV…LETG, and IVNL…GIVL. Na(+) contacts are provided by Gly76 and Thr79.

Belongs to the fluoride channel Fluc/FEX (TC 1.A.43) family.

It is found in the cell inner membrane. The catalysed reaction is fluoride(in) = fluoride(out). With respect to regulation, na(+) is not transported, but it plays an essential structural role and its presence is essential for fluoride channel function. Functionally, fluoride-specific ion channel. Important for reducing fluoride concentration in the cell, thus reducing its toxicity. This is Fluoride-specific ion channel FluC from Desulforapulum autotrophicum (strain ATCC 43914 / DSM 3382 / VKM B-1955 / HRM2) (Desulfobacterium autotrophicum).